Reading from the N-terminus, the 577-residue chain is Torulene dioxygenase (577 aa).

Positions 239, 291, 361, and 570 each coordinate Fe(2+).

This sequence belongs to the carotenoid oxygenase family. Requires Fe(2+) as cofactor.

The protein localises to the cytoplasm. It localises to the cytosol. It carries out the reaction torulene + O2 = 4'-apo-beta-carotenal + 3-methyl-2-butenal. It participates in carotenoid biosynthesis. Its function is as follows. Torulene dioxygenase; part of the pathway that mediates the biosynthesis of neurosporaxanthin, a carboxylic apocarotenoid acting as an essential protective pigments and leading to orange pigmentation. CarT mediates the cleavage of torulene into beta-apo-4'-carotenal, the aldehyde corresponding to the acidic neurosporaxanthin. Is also active on other monocyclic synthetic substrates such as beta-apo-8'-carotenal and beta-apo-10'-carotenal to produce beta-apo-14'-carotenal and retinal(beta-apo-15'-carotenal), respectively. Neurosporaxanthin is synthesized from geranyl-geranyl pyrophosphate (GGPP) through several enzymatic activities. Phytoene synthase activity performed by the bifunctional enzyme carAR first produces phytoene from geranyl-geranyl pyrophosphate (GGPP). The phytoene dehydrogenase carB then introduces 4 desaturations to lead to lycopene which is substrate of the carotene cyclase activity of carAR that leads to the production of gamma-carotene. CarB then performs a 5th desaturation reaction to yield torulene. Torulene is the substrate of the dioxidase carT that breaks the molecule, removing five carbon atoms to yield beta-apo-4'-carotenal, whereas the aldehyde dehydrogenase carD mediates the last step by converting beta-apo-4'-carotenal into neurosporaxanthin. This Fusarium fujikuroi (Bakanae and foot rot disease fungus) protein is Torulene dioxygenase.